The following is a 177-amino-acid chain: Endoribonuclease YbeY (177 aa).

Residues histidine 118, histidine 122, and histidine 128 each contribute to the Zn(2+) site.

It belongs to the endoribonuclease YbeY family. Requires Zn(2+) as cofactor.

It localises to the cytoplasm. Functionally, single strand-specific metallo-endoribonuclease involved in late-stage 70S ribosome quality control and in maturation of the 3' terminus of the 16S rRNA. This Mycolicibacterium paratuberculosis (strain ATCC BAA-968 / K-10) (Mycobacterium paratuberculosis) protein is Endoribonuclease YbeY.